We begin with the raw amino-acid sequence, 37 residues long: SGDIKAILERNGSERTRLIDILWDVQHLYGHIPDEVL.

Belongs to the complex I 51 kDa subunit family. Tetramer of an alpha and a gamma subunits (flavin-containing dimer), and a delta and a nickel-containing beta subunits (hydrogenase dimer). It depends on FMN as a cofactor. [4Fe-4S] cluster serves as cofactor.

Its subcellular location is the cytoplasm. It carries out the reaction H2 + NAD(+) = NADH + H(+). Its function is as follows. Subunits alpha and gamma of HoxS constitute an NADH--oxidoreductase. This Rhodococcus opacus (Nocardia opaca) protein is NAD-reducing hydrogenase HoxS subunit alpha (hoxF).